Here is a 169-residue protein sequence, read N- to C-terminus: Monothiol glutaredoxin-S15, mitochondrial (169 aa).

The N-terminal 37 residues, 1 to 37 (MAASLSSRLIKGIANLKAVRSSRLTSASVYQNGMMRF), are a transit peptide targeting the mitochondrion. Residues 38 to 61 (SSTVPSDSDTHDDFKPTQKVPPDS) form a disordered region. Residues 66 to 168 (KDIVENDVKD…QKLKDVSGNQ (103 aa)) enclose the Glutaredoxin domain. Residue K83 participates in glutathione binding. A [2Fe-2S] cluster-binding site is contributed by C91. Glutathione is bound by residues K120, F132, and 145-146 (SD).

Belongs to the glutaredoxin family. CGFS subfamily. [2Fe-2S]-bridged holo-homodimer. Interacts in vitro with SUFE1, BOLA1, BOLA2 and BOLA4. Interacts in vivo only with BOLA4.

It is found in the mitochondrion. In terms of biological role, may only reduce GSH-thiol disulfides, but not protein disulfides. Participates probably to the maturation of iron-sulfur proteins and to the regulation of the redox state of the BOLA proteins. The protein is Monothiol glutaredoxin-S15, mitochondrial of Arabidopsis thaliana (Mouse-ear cress).